Consider the following 214-residue polypeptide: Putative 3-methyladenine DNA glycosylase (214 aa).

This sequence belongs to the DNA glycosylase MPG family.

The protein is Putative 3-methyladenine DNA glycosylase of Mycobacterium leprae (strain Br4923).